Consider the following 88-residue polypeptide: Elongation factor 1-beta (88 aa).

Belongs to the EF-1-beta/EF-1-delta family.

Functionally, promotes the exchange of GDP for GTP in EF-1-alpha/GDP, thus allowing the regeneration of EF-1-alpha/GTP that could then be used to form the ternary complex EF-1-alpha/GTP/AAtRNA. The sequence is that of Elongation factor 1-beta (ef1b) from Thermoplasma acidophilum (strain ATCC 25905 / DSM 1728 / JCM 9062 / NBRC 15155 / AMRC-C165).